Reading from the N-terminus, the 472-residue chain is CAAX prenyl protease 1 homolog (472 aa).

The Lumenal segment spans residues 1–8 (MDVGGALD). The chain crosses the membrane as a helical span at residues 9–29 (LYGCSVNVYNAILIFIWVLFL). The Cytoplasmic portion of the chain corresponds to 30–75 (WETYINLRQLKVAKRVTESPEEIKCLMNDVDFDKSRRYAIDKMNFD). The helical transmembrane segment at 76-96 (IVSGFYNILSLSAVLYFQLIA) threads the bilayer. The Lumenal segment spans residues 97-124 (WAWHKSQEHMLFVCSYAPRSFGTTEGSE). A helical membrane pass occupies residues 125 to 145 (ILFSLLFTVYVALFQFFESLP). Residues 146 to 175 (WSYYRHFVIEERYGFNKQTIGFFIKDRLKS) lie on the Cytoplasmic side of the membrane. A helical transmembrane segment spans residues 176–196 (LAVGLVIGLPIISMLVWIIKA). Topologically, residues 197 to 207 (GGHYFYIYAYG) are lumenal. A helical membrane pass occupies residues 208-228 (FTFVVSFIIMFIYPEFIAPIF). Residues 229–340 (DRYEHFPDCE…LGHWKLKHMT (112 aa)) are Cytoplasmic-facing. Residue His329 participates in Zn(2+) binding. Residue Glu330 is part of the active site. His333 serves as a coordination point for Zn(2+). The helical transmembrane segment at 341-361 (FNLIIAQINIFFMFFAFGQLI) threads the bilayer. The Lumenal segment spans residues 362-382 (NVDQLFVDFGFPPSTAPILIR). The helical transmembrane segment at 383–403 (LIVVFQFIFMPYSSVLEFLMT) threads the bilayer. At 404 to 472 (MLSRKFEFQA…AIDAKMGKEK (69 aa)) the chain is on the cytoplasmic side. Residue Glu410 participates in Zn(2+) binding. Asp414 serves as the catalytic Proton donor.

The protein belongs to the peptidase M48A family. Homodimer; disulfide-linked. Requires Zn(2+) as cofactor.

The protein resides in the endoplasmic reticulum membrane. The enzyme catalyses Hydrolyzes the peptide bond -P2-(S-farnesyl or geranylgeranyl)C-P1'-P2'-P3'-COOH where P1' and P2' are amino acids with aliphatic side chains and P3' is any C-terminal residue.. Its activity is regulated as follows. Inhibited by ethylenediaminetetraacetic acid (EDTA) but not by serine, aspartic or cysteine protease inhibitors. Inhibited by high concentration of Zn(2+) (&gt; 0.1 mM). Its function is as follows. Zinc-dependent metalloproteinase. Proteolytically removes the C-terminal three residues of farnesylated proteins. The protein is CAAX prenyl protease 1 homolog of Taenia solium (Pork tapeworm).